Consider the following 139-residue polypeptide: Small ribosomal subunit protein bS6 (139 aa).

Residues 119–139 (LKGASKVETPTGPESTDIQEK) are disordered. The segment covering 130 to 139 (GPESTDIQEK) has biased composition (polar residues).

It belongs to the bacterial ribosomal protein bS6 family.

Its function is as follows. Binds together with bS18 to 16S ribosomal RNA. The sequence is that of Small ribosomal subunit protein bS6 from Borreliella burgdorferi (strain ZS7) (Borrelia burgdorferi).